The primary structure comprises 361 residues: MRASCTPLKAPLRRPERLASSGRFAWVLLLAPLLLLPTSSDACDDPPRFVSMKPQGTLKPSYSPGEQIVYECHLGFQPVTPGQVLALVCQDNNTWSSLQEGCKKRRCPTLADPTNGQVILVNGSTEFGSEVHYVCNNGYYLLGTNISYCEVSSGTGVNWSDNPPTCEKILCQPPPEIQNGKYTNSHKDVFEYNEVVTYSCDPSNGPDEYSLVGESKLTCIGNGEWSSQPPQCKVVKCVYPAIEHGTIVSGFGPKYYYKATVVLKCNEGFNLYGNSVVVCGENSTWEPELPKCIKGHPPRPTDASPPNGAEGLGAGYIVLVIVAVLIGVGLLLCLYCCFCRQRKKGIYVTGESHRQDILFSL.

Residues 1 to 42 (MRASCTPLKAPLRRPERLASSGRFAWVLLLAPLLLLPTSSDA) form the signal peptide. Sushi domains are found at residues 43–104 (CDDP…GCKK), 105–168 (RRCP…TCEK), 169–234 (ILCQ…QCKV), and 235–294 (VKCV…KCIK). The Extracellular portion of the chain corresponds to 43–311 (CDDPPRFVSM…DASPPNGAEG (269 aa)). Cystine bridges form between cysteine 107-cysteine 149, cysteine 135-cysteine 166, cysteine 171-cysteine 219, cysteine 200-cysteine 232, cysteine 237-cysteine 279, and cysteine 265-cysteine 292. Asparagine 122 and asparagine 145 each carry an N-linked (GlcNAc...) asparagine glycan. O-linked (GalNAc...) threonine glycosylation is present at threonine 301. Residues 312-332 (LGAGYIVLVIVAVLIGVGLLL) form a helical membrane-spanning segment. Residues 333-361 (CLYCCFCRQRKKGIYVTGESHRQDILFSL) lie on the Cytoplasmic side of the membrane. Residues histidine 353 and aspartate 356 each carry the phosphotyrosine modification.

In terms of assembly, interacts with C3b. Interacts with C4b. Interacts with moesin/MSN. In terms of processing, N-glycosylated. Highly expressed at the blood-brain barrier. Broadly expressed, with highest levels in thymus and spleen (at protein level).

It is found in the cytoplasmic vesicle. Its subcellular location is the secretory vesicle. The protein resides in the acrosome inner membrane. Acts as a cofactor for complement factor I, a serine protease which protects autologous cells against complement-mediated injury by cleaving C3b and C4b deposited on host tissue. May be involved in the fusion of the spermatozoa with the oocyte during fertilization. May act as a costimulatory factor for T-cells which induces the differentiation of CD4+ into T-regulatory 1 cells. T-regulatory 1 cells suppress immune responses by secreting interleukin-10, and therefore are thought to prevent autoimmunity. In case of bovine viral diarrhea virus (BVDV) infection, involved in virus attachment to cells. In Bos taurus (Bovine), this protein is Membrane cofactor protein (CD46).